The following is a 306-amino-acid chain: Homoserine O-acetyltransferase (306 aa).

The active-site Acyl-thioester intermediate is the cysteine 142. Substrate contacts are provided by lysine 163 and serine 192. The active-site Proton acceptor is the histidine 235. Residue glutamate 237 is part of the active site. Arginine 249 contributes to the substrate binding site.

It belongs to the MetA family.

Its subcellular location is the cytoplasm. It catalyses the reaction L-homoserine + acetyl-CoA = O-acetyl-L-homoserine + CoA. It functions in the pathway amino-acid biosynthesis; L-methionine biosynthesis via de novo pathway; O-acetyl-L-homoserine from L-homoserine: step 1/1. Transfers an acetyl group from acetyl-CoA to L-homoserine, forming acetyl-L-homoserine. This chain is Homoserine O-acetyltransferase, found in Brucella abortus (strain S19).